A 243-amino-acid polypeptide reads, in one-letter code: Pyridoxine 5'-phosphate synthase (243 aa).

Asparagine 7 contributes to the 3-amino-2-oxopropyl phosphate binding site. Aspartate 9–histidine 10 serves as a coordination point for 1-deoxy-D-xylulose 5-phosphate. Arginine 18 contacts 3-amino-2-oxopropyl phosphate. Catalysis depends on histidine 43, which acts as the Proton acceptor. Residues arginine 45 and histidine 50 each contribute to the 1-deoxy-D-xylulose 5-phosphate site. Glutamate 70 acts as the Proton acceptor in catalysis. Threonine 100 lines the 1-deoxy-D-xylulose 5-phosphate pocket. Histidine 192 functions as the Proton donor in the catalytic mechanism. Residues glycine 193 and glycine 215–phenylalanine 216 contribute to the 3-amino-2-oxopropyl phosphate site.

It belongs to the PNP synthase family. In terms of assembly, homooctamer; tetramer of dimers.

The protein localises to the cytoplasm. The enzyme catalyses 3-amino-2-oxopropyl phosphate + 1-deoxy-D-xylulose 5-phosphate = pyridoxine 5'-phosphate + phosphate + 2 H2O + H(+). It functions in the pathway cofactor biosynthesis; pyridoxine 5'-phosphate biosynthesis; pyridoxine 5'-phosphate from D-erythrose 4-phosphate: step 5/5. Functionally, catalyzes the complicated ring closure reaction between the two acyclic compounds 1-deoxy-D-xylulose-5-phosphate (DXP) and 3-amino-2-oxopropyl phosphate (1-amino-acetone-3-phosphate or AAP) to form pyridoxine 5'-phosphate (PNP) and inorganic phosphate. The polypeptide is Pyridoxine 5'-phosphate synthase (Salinibacter ruber (strain DSM 13855 / M31)).